We begin with the raw amino-acid sequence, 95 residues long: Small ribosomal subunit protein uS19 (95 aa).

This sequence belongs to the universal ribosomal protein uS19 family.

Functionally, protein S19 forms a complex with S13 that binds strongly to the 16S ribosomal RNA. This Treponema pallidum (strain Nichols) protein is Small ribosomal subunit protein uS19 (rpsS).